Consider the following 1061-residue polypeptide: Transcription termination factor 2 (1061 aa).

Disordered stretches follow at residues 1-163 (MSSE…TAEA) and 212-253 (ILSS…VKTS). Positions 32-46 (LSKSSRLSKSSRPSS) are enriched in low complexity. A phosphoserine mark is found at serine 108 and serine 110. Positions 138–152 (LSDDDSEIEYSDEVQ) are enriched in acidic residues. Phosphoserine is present on residues serine 214 and serine 215. At threonine 216 the chain carries Phosphothreonine. Residues 237–253 (KSLSPRSSAGASVVKTS) show a composition bias toward polar residues. A Helicase ATP-binding domain is found at 452-652 (WRERKLPRGG…YALLKFLRCS (201 aa)). An ATP-binding site is contributed by 465-472 (DDMGLGKT). The interval 485–523 (GQEMSEGKDESSDSDSEDDKNKKRKSVTGWKSKGRKDTR) is disordered. The segment covering 506-522 (KKRKSVTGWKSKGRKDT) has biased composition (basic residues). Residues 603–606 (DEAH) carry the DEAH box motif. The 166-residue stretch at 891–1056 (KINMVIQILK…SSKLTIDDLK (166 aa)) folds into the Helicase C-terminal domain.

This sequence belongs to the SNF2/RAD54 helicase family.

It localises to the nucleus. Its function is as follows. DsDNA-dependent ATPase which acts as a transcription termination factor by coupling ATP hydrolysis with removal of RNA polymerase II from the DNA template. The protein is Transcription termination factor 2 (lds) of Drosophila melanogaster (Fruit fly).